Here is a 432-residue protein sequence, read N- to C-terminus: Glutamyl-tRNA reductase (432 aa).

Residues 49 to 52, S107, 112 to 114, and Q118 each bind substrate; these read TCNR and ETQ. C50 (nucleophile) is an active-site residue. 186-191 provides a ligand contact to NADP(+); sequence GAGEMG.

The protein belongs to the glutamyl-tRNA reductase family. As to quaternary structure, homodimer.

The enzyme catalyses (S)-4-amino-5-oxopentanoate + tRNA(Glu) + NADP(+) = L-glutamyl-tRNA(Glu) + NADPH + H(+). The protein operates within porphyrin-containing compound metabolism; protoporphyrin-IX biosynthesis; 5-aminolevulinate from L-glutamyl-tRNA(Glu): step 1/2. Catalyzes the NADPH-dependent reduction of glutamyl-tRNA(Glu) to glutamate 1-semialdehyde (GSA). The polypeptide is Glutamyl-tRNA reductase (Campylobacter jejuni (strain RM1221)).